Here is a 332-residue protein sequence, read N- to C-terminus: Phosphoenolpyruvate transferase (332 aa).

Aspartate 63 is a 7,8-didemethyl-8-hydroxy-5-deazariboflavin binding site.

It belongs to the CofD family. Homodimer. Mg(2+) serves as cofactor.

The enzyme catalyses enolpyruvoyl-2-diphospho-5'-guanosine + 7,8-didemethyl-8-hydroxy-5-deazariboflavin = dehydro coenzyme F420-0 + GMP + H(+). Its pathway is cofactor biosynthesis; coenzyme F420 biosynthesis. Its function is as follows. Catalyzes the transfer of the phosphoenolpyruvate moiety from enoylpyruvoyl-2-diphospho-5'-guanosine (EPPG) to 7,8-didemethyl-8-hydroxy-5-deazariboflavin (FO) with the formation of dehydro coenzyme F420-0 and GMP. This Nocardia farcinica (strain IFM 10152) protein is Phosphoenolpyruvate transferase.